The sequence spans 234 residues: Phosphoribosylaminoimidazole-succinocarboxamide synthase (234 aa).

The protein belongs to the SAICAR synthetase family.

The enzyme catalyses 5-amino-1-(5-phospho-D-ribosyl)imidazole-4-carboxylate + L-aspartate + ATP = (2S)-2-[5-amino-1-(5-phospho-beta-D-ribosyl)imidazole-4-carboxamido]succinate + ADP + phosphate + 2 H(+). Its pathway is purine metabolism; IMP biosynthesis via de novo pathway; 5-amino-1-(5-phospho-D-ribosyl)imidazole-4-carboxamide from 5-amino-1-(5-phospho-D-ribosyl)imidazole-4-carboxylate: step 1/2. The polypeptide is Phosphoribosylaminoimidazole-succinocarboxamide synthase (Streptococcus uberis (strain ATCC BAA-854 / 0140J)).